Here is a 197-residue protein sequence, read N- to C-terminus: Recombination protein RecR (197 aa).

The segment at 56 to 71 adopts a C4-type zinc-finger fold; that stretch reads CRLCNNFSEAEVCEVC. The Toprim domain occupies 79 to 174; the sequence is RQLAVVEMPA…KVSRLARGVP (96 aa).

The protein belongs to the RecR family.

Functionally, may play a role in DNA repair. It seems to be involved in an RecBC-independent recombinational process of DNA repair. It may act with RecF and RecO. The protein is Recombination protein RecR of Thiobacillus denitrificans (strain ATCC 25259 / T1).